The sequence spans 336 residues: 3-hydroxyisobutyrate dehydrogenase, mitochondrial (336 aa).

The transit peptide at 1 to 36 directs the protein to the mitochondrion; sequence MAASLRLLGAASGLRYWSRRLRPAAGSFAAVCSRSV. NAD(+) is bound at residue 40–69; sequence TPVGFIGLGNMGNPMAKNLMKHGYPLIIYD. 2 positions are modified to N6-acetyllysine; alternate: K60 and K76. An N6-succinyllysine; alternate mark is found at K60 and K76. Residue K95 is modified to N6-succinyllysine. NAD(+) is bound by residues 103–104 and N108; that span reads LP. Residue K121 is modified to N6-acetyllysine. T134 serves as a coordination point for NAD(+). Residue K141 is modified to N6-succinyllysine. N6-acetyllysine is present on K145. K149 carries the post-translational modification N6-acetyllysine; alternate. Residue K149 is modified to N6-succinyllysine; alternate. K209 is a catalytic residue. An N6-acetyllysine; alternate mark is found at K238 and K242. 2 positions are modified to N6-succinyllysine; alternate: K238 and K242. K284 contacts NAD(+). The residue at position 297 (K297) is an N6-succinyllysine. Position 321 is an N6-acetyllysine; alternate (K321). K321 bears the N6-succinyllysine; alternate mark.

Belongs to the HIBADH-related family. 3-hydroxyisobutyrate dehydrogenase subfamily. Homodimer.

The protein localises to the mitochondrion. It catalyses the reaction 3-hydroxy-2-methylpropanoate + NAD(+) = 2-methyl-3-oxopropanoate + NADH + H(+). It functions in the pathway amino-acid degradation; L-valine degradation. The sequence is that of 3-hydroxyisobutyrate dehydrogenase, mitochondrial (HIBADH) from Pongo abelii (Sumatran orangutan).